We begin with the raw amino-acid sequence, 359 residues long: 5-amino-6-(D-ribitylamino)uracil--L-tyrosine 4-hydroxyphenyl transferase (359 aa).

One can recognise a Radical SAM core domain in the interval 45 to 282 (VTYVVNANIN…VYAISRIFFK (238 aa)). The [4Fe-4S] cluster site is built by cysteine 59, cysteine 63, and cysteine 66.

The protein belongs to the radical SAM superfamily. CofH family. Consists of two subunits, CofG and CofH. Requires [4Fe-4S] cluster as cofactor.

The catalysed reaction is 5-amino-6-(D-ribitylamino)uracil + L-tyrosine + S-adenosyl-L-methionine = 5-amino-5-(4-hydroxybenzyl)-6-(D-ribitylimino)-5,6-dihydrouracil + 2-iminoacetate + 5'-deoxyadenosine + L-methionine + H(+). The protein operates within cofactor biosynthesis; coenzyme F0 biosynthesis. Catalyzes the radical-mediated synthesis of 5-amino-5-(4-hydroxybenzyl)-6-(D-ribitylimino)-5,6-dihydrouracil from 5-amino-6-(D-ribitylamino)uracil and L-tyrosine. The polypeptide is 5-amino-6-(D-ribitylamino)uracil--L-tyrosine 4-hydroxyphenyl transferase (Methanococcus maripaludis (strain C7 / ATCC BAA-1331)).